Here is a 295-residue protein sequence, read N- to C-terminus: uncharacterized protein (295 aa).

NAD(+)-binding positions include 11 to 25 and Thr101; that span reads GYIG…MAKR. Lys176 is a catalytic residue. Lys252 is an NAD(+) binding site.

It belongs to the HIBADH-related family.

This is an uncharacterized protein from Mycobacterium tuberculosis (strain CDC 1551 / Oshkosh).